A 520-amino-acid chain; its full sequence is MEASLAIYYGIILITVTLGLVYTWRVLNWIWLKPKRLEKLLREQGCNGNSYRLVLGDLKDSYKMGKKAKSKPMELSDDIIPRVIPYIQQLVQIYGKNPFIWSGTTPRLILTEPELIKDVLNRTSELQKPKYEIFKFLFSGLIIHEGEKWRKHRRLMNAAFQLEKLKIMAPSFLTSCIDMISKWESTLSSDGSGEIDIWPSLQNLTSDVISRNAFGSSYEEGKRIFDLQREQGELVMKNLVKSLIPLWRFIPTATQRRMHEIEKDIDSSLRYIINKREKAMKAGEATENDLLGLLLESNHQEIRDHGNNKNMGMSLEDVVGECKLFYLAGQESTSTMLVWTMILLSRYPDWQERAREEVLQIFGNKKPDYEGLNKLKILPMILYEVLRLYPPAFGVTRYVGKDIKFGNMEVPAGVEVFLPIILLQHNNELWGDDAKMFNPERFAEGISKATNGRFIYFPFGGGPRVCMGQNFSLLEAKMAVSMILQNFYFELSPTYAHTPNLVMTIQPEKGAHVILRKVKA.

Residues Ser4–Trp24 traverse the membrane as a helical segment. A heme-binding site is contributed by Cys466.

It belongs to the cytochrome P450 family. It depends on heme as a cofactor.

Its subcellular location is the membrane. Functionally, catalyzes hydroxylation at the C-2 position of different intermediates of the hemolytic sapogenin biosynthetic pathway downstream of oleanolic acid synthesis. The sequence is that of Cytochrome P450 716A67 from Medicago truncatula (Barrel medic).